The sequence spans 235 residues: Small ribosomal subunit protein uS3 (235 aa).

Residues 39–107 form the KH type-2 domain; the sequence is VRSYVKKKLI…PAQVNISEIR (69 aa).

Belongs to the universal ribosomal protein uS3 family. As to quaternary structure, part of the 30S ribosomal subunit. Forms a tight complex with proteins S10 and S14.

Binds the lower part of the 30S subunit head. Binds mRNA in the 70S ribosome, positioning it for translation. This is Small ribosomal subunit protein uS3 from Buchnera aphidicola subsp. Cinara cedri (strain Cc).